The following is a 317-amino-acid chain: tRNA dimethylallyltransferase (317 aa).

16-23 (GPTASGKS) is a binding site for ATP. 18–23 (TASGKS) contacts substrate. Interaction with substrate tRNA stretches follow at residues 41 to 44 (DSAQ), 165 to 169 (QRIQR), and 247 to 252 (RCVGYR).

This sequence belongs to the IPP transferase family. Monomer. Mg(2+) serves as cofactor.

It catalyses the reaction adenosine(37) in tRNA + dimethylallyl diphosphate = N(6)-dimethylallyladenosine(37) in tRNA + diphosphate. Its function is as follows. Catalyzes the transfer of a dimethylallyl group onto the adenine at position 37 in tRNAs that read codons beginning with uridine, leading to the formation of N6-(dimethylallyl)adenosine (i(6)A). This Nitrosomonas europaea (strain ATCC 19718 / CIP 103999 / KCTC 2705 / NBRC 14298) protein is tRNA dimethylallyltransferase.